The primary structure comprises 137 residues: L-ectoine synthase (137 aa).

Residues V118–L137 form a disordered region.

The protein belongs to the ectoine synthase family.

The catalysed reaction is (2S)-4-acetamido-2-aminobutanoate = L-ectoine + H2O. It participates in amine and polyamine biosynthesis; ectoine biosynthesis; L-ectoine from L-aspartate 4-semialdehyde: step 3/3. Seems to require potassium ions for its activity and stability. Slightly inhibited by N-ethylmaleimide. Its function is as follows. Catalyzes the circularization of gamma-N-acetyl-alpha,gamma-diaminobutyric acid (ADABA) to ectoine (1,4,5,6-tetrahydro-2-methyl-4-pyrimidine carboxylic acid), which is an excellent osmoprotectant. Does not act on N-acetylated amino acids like N-alpha-acetyl-L-asparagine,N-alpha-acetyl-L-ornithine, N-alpha-acetyl-L-lysine and N-epsilon-acetyl-L-lysine. The chain is L-ectoine synthase (ectC) from Halomonas elongata (strain ATCC 33173 / DSM 2581 / NBRC 15536 / NCIMB 2198 / 1H9).